We begin with the raw amino-acid sequence, 313 residues long: Beta-lactamase (313 aa).

The N-terminal stretch at 1–15 is a signal peptide; that stretch reads MQRIGVTDYTILGTV. The active-site Acyl-ester intermediate is the Ser190.

Belongs to the class-C beta-lactamase family.

The enzyme catalyses a beta-lactam + H2O = a substituted beta-amino acid. In terms of biological role, upon expression in E.coli enables the latter to utilize penicillin as a carbon source. This Burkholderia multivorans (strain ATCC 17616 / 249) protein is Beta-lactamase (penA).